A 165-amino-acid polypeptide reads, in one-letter code: 6,7-dimethyl-8-ribityllumazine synthase (165 aa).

5-amino-6-(D-ribitylamino)uracil contacts are provided by residues Trp-26, 58 to 60 (SIE), and 80 to 82 (VVI). 85 to 86 (GT) contacts (2S)-2-hydroxy-3-oxobutyl phosphate. His-88 acts as the Proton donor in catalysis. Residue Asn-113 participates in 5-amino-6-(D-ribitylamino)uracil binding. A (2S)-2-hydroxy-3-oxobutyl phosphate-binding site is contributed by Arg-127.

This sequence belongs to the DMRL synthase family.

The catalysed reaction is (2S)-2-hydroxy-3-oxobutyl phosphate + 5-amino-6-(D-ribitylamino)uracil = 6,7-dimethyl-8-(1-D-ribityl)lumazine + phosphate + 2 H2O + H(+). Its pathway is cofactor biosynthesis; riboflavin biosynthesis; riboflavin from 2-hydroxy-3-oxobutyl phosphate and 5-amino-6-(D-ribitylamino)uracil: step 1/2. In terms of biological role, catalyzes the formation of 6,7-dimethyl-8-ribityllumazine by condensation of 5-amino-6-(D-ribitylamino)uracil with 3,4-dihydroxy-2-butanone 4-phosphate. This is the penultimate step in the biosynthesis of riboflavin. The sequence is that of 6,7-dimethyl-8-ribityllumazine synthase from Saccharopolyspora erythraea (strain ATCC 11635 / DSM 40517 / JCM 4748 / NBRC 13426 / NCIMB 8594 / NRRL 2338).